The primary structure comprises 418 residues: MQHRQVALLLSIIPGLGQFYNKQWIKGIVFLFLGASFFAVFGDLLNMGFWGIFTLGTEVPRDNSVFLLAEGIIAVIVTCFGLAVYYVNLRDAFQSGKQRDENKPLSSLKEQYQHIISEGYPYVVSGPSLFILIFAVIFPILFSFALAFTNYDLYHSPPAKLIDWVGFQTFANIFTVDIWRSTFFDVLAWTVVWTLAASTLQVTLGIFLAIIVNQKDLRFKRFFRTILILPWAVPGFVTILIFAGLFNDSFGAMNHDILAFFGIDPLPWMTDANWSRLALILMQGWLGFPYIFLVSTGVLQSIPDDLYEAATIDGASVFSKLRYITLPMVFIAMAPIIITQFTFNFNNFNIIYLFNGGGPAVTGSTAGGTDILVSWIYKLTMQSSQYSLAAALTILLSVFVISIALWQFRQTKSFKEEA.

A run of 9 helical transmembrane segments spans residues 25 to 45, 65 to 85, 129 to 149, 191 to 211, 226 to 246, 279 to 299, 323 to 343, 357 to 379, and 388 to 408; these read IKGI…GDLL, VFLL…LAVY, LFIL…LAFT, VVWT…LAII, ILIL…AGLF, LILM…TGVL, YITL…QFTF, GGPA…IYKL, and LAAA…LWQF. The ABC transmembrane type-1 domain maps to 187–407; that stretch reads LAWTVVWTLA…VFVISIALWQ (221 aa).

The protein belongs to the binding-protein-dependent transport system permease family. In terms of assembly, the complex is composed of two ATP-binding proteins (MsmX), two transmembrane proteins (GanP and GanQ) and a solute-binding protein (GanS).

Its subcellular location is the cell membrane. Involved in galactan degradation. Part of the ABC transporter complex GanPQS involved in the uptake of galactooligosaccharides. Responsible for the translocation of the substrate across the membrane. In Bacillus subtilis (strain 168), this protein is Galactooligosaccharides transport system permease protein GanP (ganP).